An 869-amino-acid polypeptide reads, in one-letter code: Bifunctional uridylyltransferase/uridylyl-removing enzyme (869 aa).

Residues 1-332 (MTDTPAERPD…QFDGEATPEP (332 aa)) are uridylyltransferase. The segment at 333–691 (LGGGFSLRRG…RRAVPDNDAL (359 aa)) is uridylyl-removing. The HD domain occupies 450–572 (VDQHTLMVLR…VGTRERLDYL (123 aa)). ACT domains are found at residues 692 to 774 (EVFV…RAVP) and 798 to 869 (RISL…LDPV).

The protein belongs to the GlnD family. The cofactor is Mg(2+).

The enzyme catalyses [protein-PII]-L-tyrosine + UTP = [protein-PII]-uridylyl-L-tyrosine + diphosphate. It catalyses the reaction [protein-PII]-uridylyl-L-tyrosine + H2O = [protein-PII]-L-tyrosine + UMP + H(+). Uridylyltransferase (UTase) activity is inhibited by glutamine, while glutamine activates uridylyl-removing (UR) activity. Modifies, by uridylylation and deuridylylation, the PII regulatory proteins (GlnB and homologs), in response to the nitrogen status of the cell that GlnD senses through the glutamine level. Under low glutamine levels, catalyzes the conversion of the PII proteins and UTP to PII-UMP and PPi, while under higher glutamine levels, GlnD hydrolyzes PII-UMP to PII and UMP (deuridylylation). Thus, controls uridylylation state and activity of the PII proteins, and plays an important role in the regulation of nitrogen assimilation and metabolism. This is Bifunctional uridylyltransferase/uridylyl-removing enzyme from Xanthomonas axonopodis pv. citri (strain 306).